Here is a 248-residue protein sequence, read N- to C-terminus: Probable transcriptional regulatory protein RPA1097 (248 aa).

A disordered region spans residues 1 to 21 (MAGHSQFKNIMHRKGRQDAQR).

This sequence belongs to the TACO1 family.

Its subcellular location is the cytoplasm. The polypeptide is Probable transcriptional regulatory protein RPA1097 (Rhodopseudomonas palustris (strain ATCC BAA-98 / CGA009)).